The primary structure comprises 263 residues: MSLSPVIFSIGPVSIYWYSLAYVLGIVFAYWYLHKLDNQKIFTKNFYDSLLTAVIIGIILGGRLGYVLIYDPVLYISNPIEILKTWEGGMSFHGGAIGVLLAVIISCRRHNIPIFYTLDLISCGVPIGLLLGRIGNFINGELFGRVTTMPWGMVFPESGDNLLRHPSQLYEAFFEGALLFVVVNSLFYLNKMRLYYGATTGVAVMLYGVARFMVEFFREPDYQIGYLWFNLTMGQLLSIPMILLGMLIYLGALNFRFNTKSIQ.

The next 4 membrane-spanning stretches (helical) occupy residues 6–26, 50–70, 85–105, and 112–132; these read VIFS…VLGI, LLTA…VLIY, TWEG…AVII, and IPIF…LLLG. Arg-133 provides a ligand contact to a 1,2-diacyl-sn-glycero-3-phospho-(1'-sn-glycerol). The next 3 membrane-spanning stretches (helical) occupy residues 169–189, 197–217, and 233–253; these read LYEA…LFYL, GATT…VEFF, and MGQL…LGAL.

Belongs to the Lgt family.

It is found in the cell membrane. It carries out the reaction L-cysteinyl-[prolipoprotein] + a 1,2-diacyl-sn-glycero-3-phospho-(1'-sn-glycerol) = an S-1,2-diacyl-sn-glyceryl-L-cysteinyl-[prolipoprotein] + sn-glycerol 1-phosphate + H(+). The protein operates within protein modification; lipoprotein biosynthesis (diacylglyceryl transfer). Functionally, catalyzes the transfer of the diacylglyceryl group from phosphatidylglycerol to the sulfhydryl group of the N-terminal cysteine of a prolipoprotein, the first step in the formation of mature lipoproteins. This Wolbachia pipientis subsp. Culex pipiens (strain wPip) protein is Phosphatidylglycerol--prolipoprotein diacylglyceryl transferase.